Reading from the N-terminus, the 331-residue chain is Thiamine thiazole synthase (331 aa).

Residues S82, 103-104, G111, and V176 each bind substrate; that span reads EA. The residue at position 210 (C210) is a 2,3-didehydroalanine (Cys). Substrate is bound by residues D212, H242, M296, and 306–308; that span reads RMG.

The protein belongs to the THI4 family. As to quaternary structure, homooctamer. The cofactor is Fe cation. During the catalytic reaction, a sulfide is transferred from Cys-210 to a reaction intermediate, generating a dehydroalanine residue.

Its subcellular location is the cytoplasm. It localises to the nucleus. The enzyme catalyses [ADP-thiazole synthase]-L-cysteine + glycine + NAD(+) = [ADP-thiazole synthase]-dehydroalanine + ADP-5-ethyl-4-methylthiazole-2-carboxylate + nicotinamide + 3 H2O + 2 H(+). Its function is as follows. Involved in biosynthesis of the thiamine precursor thiazole. Catalyzes the conversion of NAD and glycine to adenosine diphosphate 5-(2-hydroxyethyl)-4-methylthiazole-2-carboxylic acid (ADT), an adenylated thiazole intermediate. The reaction includes an iron-dependent sulfide transfer from a conserved cysteine residue of the protein to a thiazole intermediate. The enzyme can only undergo a single turnover, which suggests it is a suicide enzyme. May have additional roles in adaptation to various stress conditions and in DNA damage tolerance. The protein is Thiamine thiazole synthase of Eremothecium gossypii (strain ATCC 10895 / CBS 109.51 / FGSC 9923 / NRRL Y-1056) (Yeast).